We begin with the raw amino-acid sequence, 327 residues long: Aspartate--ammonia ligase (327 aa).

Belongs to the class-II aminoacyl-tRNA synthetase family. AsnA subfamily.

The protein resides in the cytoplasm. It carries out the reaction L-aspartate + NH4(+) + ATP = L-asparagine + AMP + diphosphate + H(+). Its pathway is amino-acid biosynthesis; L-asparagine biosynthesis; L-asparagine from L-aspartate (ammonia route): step 1/1. The sequence is that of Aspartate--ammonia ligase from Bacillus cereus (strain B4264).